The sequence spans 640 residues: 1-deoxy-D-xylulose-5-phosphate synthase (640 aa).

Residues H79 and 120–122 (AHS) each bind thiamine diphosphate. D151 is a Mg(2+) binding site. Thiamine diphosphate contacts are provided by residues 152–153 (GA), N180, Y289, and E371. Residue N180 participates in Mg(2+) binding.

This sequence belongs to the transketolase family. DXPS subfamily. As to quaternary structure, homodimer. The cofactor is Mg(2+). It depends on thiamine diphosphate as a cofactor.

The enzyme catalyses D-glyceraldehyde 3-phosphate + pyruvate + H(+) = 1-deoxy-D-xylulose 5-phosphate + CO2. The protein operates within metabolic intermediate biosynthesis; 1-deoxy-D-xylulose 5-phosphate biosynthesis; 1-deoxy-D-xylulose 5-phosphate from D-glyceraldehyde 3-phosphate and pyruvate: step 1/1. Catalyzes the acyloin condensation reaction between C atoms 2 and 3 of pyruvate and glyceraldehyde 3-phosphate to yield 1-deoxy-D-xylulose-5-phosphate (DXP). The polypeptide is 1-deoxy-D-xylulose-5-phosphate synthase (Novosphingobium aromaticivorans (strain ATCC 700278 / DSM 12444 / CCUG 56034 / CIP 105152 / NBRC 16084 / F199)).